A 135-amino-acid polypeptide reads, in one-letter code: Small ribosomal subunit protein uS8 (135 aa).

This sequence belongs to the universal ribosomal protein uS8 family. Part of the 30S ribosomal subunit. Contacts proteins S5 and S12.

Functionally, one of the primary rRNA binding proteins, it binds directly to 16S rRNA central domain where it helps coordinate assembly of the platform of the 30S subunit. This is Small ribosomal subunit protein uS8 from Nocardioides sp. (strain ATCC BAA-499 / JS614).